The sequence spans 291 residues: Putative GATA transcription factor 13 (291 aa).

The GATA-type zinc-finger motif lies at 187–241 (KSRRLKCTHCETTTTPQWREGPNGRKTLCNACGIRFRSGRLVLEYRPAASPTFIP). The segment at 271 to 291 (TSGPETRSRLRNFGRPMSYGQ) is disordered.

Belongs to the type IV zinc-finger family. Class A subfamily.

The protein resides in the nucleus. In terms of biological role, transcriptional activator that specifically binds 5'-GATA-3' or 5'-GAT-3' motifs within gene promoters. May be involved in the regulation of some light-responsive genes. The chain is Putative GATA transcription factor 13 (GATA13) from Arabidopsis thaliana (Mouse-ear cress).